The chain runs to 20 residues: Venom protease (20 aa).

It belongs to the peptidase S1 family. Contains 3 disulfide bonds. Post-translationally, N-glycosylated. In terms of tissue distribution, expressed by the venom duct.

It is found in the secreted. The chain is Venom protease from Bombus terrestris (Buff-tailed bumblebee).